Consider the following 247-residue polypeptide: MNVIPCSIKTLKGLYDISGVEVGQHLYWQIGALQIHAQVLITSWVVIAILLGSVIIAVRNPQTIPSGGQNFFEYVLEFIRDLSKAQIGEEYGPWVPFIGTMFLFIFVSNWSGALLPWKIIQLPHGELAAPTNDINTTVALALPTSVAYFYAGLTKKGLGYFRKYIQPTPILLPINILEDFTKPLSLSFRLFGNILADELVVVVLVSLVPSLVPIPVMFLGLFTSGIQALIFATLAAAYIGESMEGHH.

Helical transmembrane passes span 38–58, 95–115, 134–154, 199–219, and 220–240; these read QVLITSWVVIAILLGSVIIAV, VPFIGTMFLFIFVSNWSGALL, INTTVALALPTSVAYFYAGLT, LVVVVLVSLVPSLVPIPVMFL, and GLFTSGIQALIFATLAAAYIG.

This sequence belongs to the ATPase A chain family. As to quaternary structure, F-type ATPases have 2 components, CF(1) - the catalytic core - and CF(0) - the membrane proton channel. CF(1) has five subunits: alpha(3), beta(3), gamma(1), delta(1), epsilon(1). CF(0) has four main subunits: a, b, b' and c.

Its subcellular location is the plastid. It localises to the chloroplast thylakoid membrane. Key component of the proton channel; it plays a direct role in the translocation of protons across the membrane. The polypeptide is ATP synthase subunit a, chloroplastic (Dioscorea elephantipes (Elephant's foot yam)).